Here is a 620-residue protein sequence, read N- to C-terminus: Chaperone protein HscA homolog (620 aa).

It belongs to the heat shock protein 70 family.

Its function is as follows. Chaperone involved in the maturation of iron-sulfur cluster-containing proteins. Has a low intrinsic ATPase activity which is markedly stimulated by HscB. In Pseudomonas syringae pv. tomato (strain ATCC BAA-871 / DC3000), this protein is Chaperone protein HscA homolog.